The sequence spans 87 residues: Large ribosomal subunit protein bL27 (87 aa).

This sequence belongs to the bacterial ribosomal protein bL27 family.

The protein is Large ribosomal subunit protein bL27 of Dichelobacter nodosus (strain VCS1703A).